The following is a 1597-amino-acid chain: THO complex subunit 2 (1597 aa).

Disordered stretches follow at residues 1250 to 1274 and 1384 to 1597; these read KSQR…SKDR and EPYP…RYQR. Residues 1419 to 1430 are compositionally biased toward polar residues; that stretch reads GSSNYRGPSNDR. 4 stretches are compositionally biased toward basic and acidic residues: residues 1458–1490, 1500–1512, 1522–1545, and 1554–1567; these read TYND…EYKK, FPEK…KDSS, YKRD…ETIR, and RNTR…RANE. The segment covering 1568-1582 has biased composition (polar residues); the sequence is NQRYNGNRKSNTQAL.

The protein belongs to the THOC2 family. As to quaternary structure, component of the THO complex, which is composed of HPR1, MFT1, THO2 and THP2. Together with SUB2, TEX1 and YRA1, THO forms the transcription/export (TREX) complex. THO associates with DNA and RNA in vitro.

It is found in the nucleus. Component the THO subcomplex of the TREX complex, which operates in coupling transcription elongation to mRNA export. The THO complex is recruited to transcribed genes and moves along the gene with the elongating polymerase during transcription. THO is important for stabilizing nascent RNA in the RNA polymerase II elongation complex by preventing formation of DNA:RNA hybrids behind the elongating polymerase. It functions in cotranscriptional formation of an export-competent messenger ribonucleoprotein particle (mRNP) by facilitating the loading of ATP-dependent RNA helicase SUB2 and the mRNA export factor YRA1 along the nascent mRNA. In Saccharomyces cerevisiae (strain ATCC 204508 / S288c) (Baker's yeast), this protein is THO complex subunit 2 (THO2).